The following is a 338-amino-acid chain: Phenylalanine--tRNA ligase alpha subunit (338 aa).

Residue E253 participates in Mg(2+) binding.

Belongs to the class-II aminoacyl-tRNA synthetase family. Phe-tRNA synthetase alpha subunit type 1 subfamily. Tetramer of two alpha and two beta subunits. The cofactor is Mg(2+).

It localises to the cytoplasm. The enzyme catalyses tRNA(Phe) + L-phenylalanine + ATP = L-phenylalanyl-tRNA(Phe) + AMP + diphosphate + H(+). This Trichlorobacter lovleyi (strain ATCC BAA-1151 / DSM 17278 / SZ) (Geobacter lovleyi) protein is Phenylalanine--tRNA ligase alpha subunit.